We begin with the raw amino-acid sequence, 708 residues long: Phosphate acetyltransferase (708 aa).

Residues 388–708 (EFCYNLKLLS…TIALTSIQSE (321 aa)) are phosphate acetyltransferase.

This sequence in the N-terminal section; belongs to the CobB/CobQ family. In the C-terminal section; belongs to the phosphate acetyltransferase and butyryltransferase family. As to quaternary structure, homohexamer.

It localises to the cytoplasm. The catalysed reaction is acetyl-CoA + phosphate = acetyl phosphate + CoA. The protein operates within metabolic intermediate biosynthesis; acetyl-CoA biosynthesis; acetyl-CoA from acetate: step 2/2. In terms of biological role, involved in acetate metabolism. This chain is Phosphate acetyltransferase (pta), found in Buchnera aphidicola subsp. Acyrthosiphon pisum (strain APS) (Acyrthosiphon pisum symbiotic bacterium).